Here is a 1163-residue protein sequence, read N- to C-terminus: Leptin receptor (1163 aa).

The signal sequence occupies residues 1-21; it reads MICQKFCVVLLHWEFICVITA. The Extracellular portion of the chain corresponds to 22–837; that stretch reads FNLSYPITPW…QDNTEKHQND (816 aa). N-linked (GlcNAc...) asparagine glycosylation is found at Asn23, Asn41, Asn56, Asn71, Asn79, Asn96, and Asn114. 2 disulfide bridges follow: Cys37/Cys88 and Cys87/Cys97. 2 disulfides stabilise this stretch: Cys129-Cys140 and Cys184-Cys194. 5 N-linked (GlcNAc...) asparagine glycosylation sites follow: Asn185, Asn204, Asn274, Asn345, and Asn395. The 95-residue stretch at 237–331 folds into the Fibronectin type-III 1 domain; that stretch reads PPLGLRMEIT…TPHVFTTQDV (95 aa). Cystine bridges form between Cys350–Cys410 and Cys411–Cys416. Asn431 carries an N-linked (GlcNAc...) asparagine glycan. Cystine bridges form between Cys434/Cys445, Cys471/Cys526, and Cys486/Cys496. Residues 465–482 are leptin-binding; it reads RRSSLYCFDIPSIHPISK. Fibronectin type-III domains lie at 537–632, 637–730, and 738–831; these read PPSS…TVVM, PMRG…LTFS, and IVQS…QDNT. Residues 620–624 carry the WSXWS motif motif; the sequence is WSNWS. Residues Asn622, Asn657, Asn668, Asn686, Asn695, Asn726, and Asn748 are each glycosylated (N-linked (GlcNAc...) asparagine). The chain crosses the membrane as a helical span at residues 838–860; it reads AGLYVIVPVIISSSILLLGTLLI. Topologically, residues 861 to 1163 are cytoplasmic; the sequence is LHQRMKKLFW…MENKMCDLTV (303 aa). The Box 1 motif motif lies at 869–877; that stretch reads FWEDVPNPK. Phosphoserine is present on Ser880. A required for JAK2 activation region spans residues 891-896; it reads ETFEHL. The segment at 896–904 is required for STAT3 phosphorylation; the sequence is LFIKHTASV. Tyr984 is modified (phosphotyrosine; by JAK2). Tyr1077 carries the post-translational modification Phosphotyrosine. Tyr1139 is subject to Phosphotyrosine; by JAK2.

Belongs to the type I cytokine receptor family. Type 2 subfamily. As to quaternary structure, present as a mixture of monomers and dimers. The phosphorylated receptor binds a number of SH2 domain-containing proteins such as JAK2, STAT3, PTPN11, and SOCS3. Interaction with SOCS3 inhibits JAK/STAT signaling and MAPK cascade. Post-translationally, on ligand binding, phosphorylated on two conserved C-terminal tyrosine residues (isoform B only) by JAK2. Tyr-984 is required for complete binding and activation of PTPN11, ERK/FOS activation and, for interaction with SOCS3. Phosphorylation on Tyr-1139 is required for STAT3 binding/activation. In terms of processing, on ligand binding, phosphorylated on two conserved C-terminal tyrosine residues (isoform B only) by JAK2. Tyr-984 is required for complete binding and activation of PTPN11, ERK/FOS activation,for interaction with SOCS3 and SOCS3 mediated inhibition of leptin signaling. Phosphorylation on Tyr-1139 is required for STAT3 binding/activation. Phosphorylation of Tyr-1077 has a more accessory role. In terms of tissue distribution, widely expressed. High expression of isoform B in liver, adipose tissue, hypothalamus and choroid plexus.

Its subcellular location is the cell membrane. The protein localises to the basolateral cell membrane. In terms of biological role, receptor for hormone LEP/leptin. On ligand binding, mediates LEP central and peripheral effects through the activation of different signaling pathways such as JAK2/STAT3 and MAPK cascade/FOS. In the hypothalamus, LEP acts as an appetite-regulating factor that induces a decrease in food intake and an increase in energy consumption by inducing anorexinogenic factors and suppressing orexigenic neuropeptides, also regulates bone mass and secretion of hypothalamo-pituitary-adrenal hormones. In the periphery, increases basal metabolism, influences reproductive function, regulates pancreatic beta-cell function and insulin secretion, is pro-angiogenic and affects innate and adaptive immunity. Control of energy homeostasis and melanocortin production (stimulation of POMC and full repression of AgRP transcription) is mediated by STAT3 signaling, whereas distinct signals regulate NPY and the control of fertility, growth and glucose homeostasis. Involved in the regulation of counter-regulatory response to hypoglycemia by inhibiting neurons of the parabrachial nucleus. Has a specific effect on T lymphocyte responses, differentially regulating the proliferation of naive and memory T-cells. Leptin increases Th1 and suppresses Th2 cytokine production. May transport LEP across the blood-brain barrier. Binds LEP and mediates LEP endocytosis. Does not induce phosphorylation of and activate STAT3. This chain is Leptin receptor (LEPR), found in Macaca mulatta (Rhesus macaque).